Reading from the N-terminus, the 225-residue chain is UPF0758 protein Spea_3837 (225 aa).

The region spanning 102–224 (ILSDPDLTRD…IVSFAERGWI (123 aa)) is the MPN domain. Zn(2+)-binding residues include histidine 173, histidine 175, and aspartate 186. A JAMM motif motif is present at residues 173 to 186 (HNHPSGIAEPSTAD).

This sequence belongs to the UPF0758 family.

This is UPF0758 protein Spea_3837 from Shewanella pealeana (strain ATCC 700345 / ANG-SQ1).